Reading from the N-terminus, the 995-residue chain is Endosome/lysosome-associated apoptosis and autophagy regulator family member 2 (995 aa).

The signal sequence occupies residues 1–21; it reads MGVFCWSGCLVISLQLLLGAA. The Extracellular portion of the chain corresponds to 22–895; it reads LDNLSTCKEE…ACESIDFWLK (874 aa). N-linked (GlcNAc...) asparagine glycans are attached at residues Asn-24, Asn-136, Asn-245, Asn-372, Asn-527, Asn-649, Asn-683, Asn-700, and Asn-758. An MRH domain is found at 639–843; it reads SECLVTYTNE…LWETAEACPL (205 aa). 2 disulfide bridges follow: Cys-641/Cys-687 and Cys-697/Cys-725. Cystine bridges form between Cys-793-Cys-829 and Cys-805-Cys-841. An N-linked (GlcNAc...) asparagine glycan is attached at Asn-883. A helical membrane pass occupies residues 896 to 916; sequence VGAGVGAFTAVLLIALTCYFW. At 917–995 the chain is on the cytoplasmic side; it reads KKNQKLEYKY…QLKSSRAQNI (79 aa).

It belongs to the ELAPOR family. As to expression, expressed in the animal half of the embryo during gastrulation, becoming restricted to the ventral ectoderm at stage 12.5. At the neurula stage, expressed in the anterior ectoderm surrounding the neural plate, and weakly in the epidermis. Expression is especially high in the presumptive hatching gland and cement gland regions. Surprisingly, by the tailbud stage (stage 22), expression is limited to the hatching gland and is not seen in the cement gland. Conversely, in tadpoles expressed broadly in the head, heart and fin. Expression in the head is seen in the primary mouth and in the brain, eyes, otic vesicles and olfactory pits.

It localises to the cell membrane. Its function is as follows. Functions as a regulator of the BMP signaling pathway and is involved in epidermal differentiation. This chain is Endosome/lysosome-associated apoptosis and autophagy regulator family member 2 (elapor2), found in Xenopus laevis (African clawed frog).